A 467-amino-acid chain; its full sequence is 3-isopropylmalate dehydratase large subunit (467 aa).

[4Fe-4S] cluster-binding residues include cysteine 348, cysteine 408, and cysteine 411. The segment at 417 to 445 (DQLTPGERSASTSNRNFEGRQGKGGRTHL) is disordered.

Belongs to the aconitase/IPM isomerase family. LeuC type 1 subfamily. In terms of assembly, heterodimer of LeuC and LeuD. The cofactor is [4Fe-4S] cluster.

The enzyme catalyses (2R,3S)-3-isopropylmalate = (2S)-2-isopropylmalate. It functions in the pathway amino-acid biosynthesis; L-leucine biosynthesis; L-leucine from 3-methyl-2-oxobutanoate: step 2/4. Catalyzes the isomerization between 2-isopropylmalate and 3-isopropylmalate, via the formation of 2-isopropylmaleate. This chain is 3-isopropylmalate dehydratase large subunit, found in Saccharopolyspora erythraea (strain ATCC 11635 / DSM 40517 / JCM 4748 / NBRC 13426 / NCIMB 8594 / NRRL 2338).